Reading from the N-terminus, the 383-residue chain is Na(+)/H(+) antiporter NhaA (383 aa).

The next 11 membrane-spanning stretches (helical) occupy residues leucine 10–proline 30, leucine 56–isoleucine 76, isoleucine 91–serine 111, glycine 121–glycine 141, leucine 150–phenylalanine 170, serine 174–asparagine 194, valine 206–alanine 226, proline 254–serine 274, isoleucine 289–phenylalanine 308, glycine 327–phenylalanine 347, and alanine 355–leucine 375.

The protein belongs to the NhaA Na(+)/H(+) (TC 2.A.33) antiporter family.

It localises to the cell inner membrane. The catalysed reaction is Na(+)(in) + 2 H(+)(out) = Na(+)(out) + 2 H(+)(in). Functionally, na(+)/H(+) antiporter that extrudes sodium in exchange for external protons. The chain is Na(+)/H(+) antiporter NhaA from Francisella tularensis subsp. mediasiatica (strain FSC147).